A 273-amino-acid polypeptide reads, in one-letter code: Dermonecrotic toxin LhSicTox-alphaIA2avi (273 aa).

The active site involves H5. E25 and D27 together coordinate Mg(2+). The active-site Nucleophile is H41. 2 disulfide bridges follow: C45-C51 and C47-C190. D85 contributes to the Mg(2+) binding site.

This sequence belongs to the arthropod phospholipase D family. Class II subfamily. Mg(2+) serves as cofactor. Expressed by the venom gland.

The protein localises to the secreted. It catalyses the reaction an N-(acyl)-sphingosylphosphocholine = an N-(acyl)-sphingosyl-1,3-cyclic phosphate + choline. The catalysed reaction is an N-(acyl)-sphingosylphosphoethanolamine = an N-(acyl)-sphingosyl-1,3-cyclic phosphate + ethanolamine. It carries out the reaction a 1-acyl-sn-glycero-3-phosphocholine = a 1-acyl-sn-glycero-2,3-cyclic phosphate + choline. The enzyme catalyses a 1-acyl-sn-glycero-3-phosphoethanolamine = a 1-acyl-sn-glycero-2,3-cyclic phosphate + ethanolamine. In terms of biological role, dermonecrotic toxins cleave the phosphodiester linkage between the phosphate and headgroup of certain phospholipids (sphingolipid and lysolipid substrates), forming an alcohol (often choline) and a cyclic phosphate. This toxin acts on sphingomyelin (SM). It may also act on ceramide phosphoethanolamine (CPE), lysophosphatidylcholine (LPC) and lysophosphatidylethanolamine (LPE), but not on lysophosphatidylserine (LPS), and lysophosphatidylglycerol (LPG). It acts by transphosphatidylation, releasing exclusively cyclic phosphate products as second products. Induces dermonecrosis, hemolysis, increased vascular permeability, edema, inflammatory response, and platelet aggregation. This is Dermonecrotic toxin LhSicTox-alphaIA2avi from Loxosceles hirsuta (Recluse spider).